Consider the following 200-residue polypeptide: Ribosomal RNA large subunit methyltransferase E (200 aa).

The S-adenosyl-L-methionine site is built by G51, W53, D71, D90, and D112. K151 (proton acceptor) is an active-site residue.

Belongs to the class I-like SAM-binding methyltransferase superfamily. RNA methyltransferase RlmE family.

Its subcellular location is the cytoplasm. The catalysed reaction is uridine(2552) in 23S rRNA + S-adenosyl-L-methionine = 2'-O-methyluridine(2552) in 23S rRNA + S-adenosyl-L-homocysteine + H(+). Its function is as follows. Specifically methylates the uridine in position 2552 of 23S rRNA at the 2'-O position of the ribose in the fully assembled 50S ribosomal subunit. In Treponema pallidum (strain Nichols), this protein is Ribosomal RNA large subunit methyltransferase E.